A 221-amino-acid polypeptide reads, in one-letter code: MTKIKICGITRAQDALEAALAGADALGFNFSRKSPRRIDAETARSIIAGLPPLVTPVGVFVEQSPEEINDICRHCGLLVAQLHSDDYDAEKTLQIKGVRVIRVFRPSPGFEVSQVRKFTEKTGCRSFLFDAYSPAMAGGTGQSIEAQTAGSLFDETRDFSWALLAGGLKPENVGDAVTLIRPWGVDTASGVESGPGIKDALKIRQFVEAVRKADRSLTNCC.

Belongs to the TrpF family.

It carries out the reaction N-(5-phospho-beta-D-ribosyl)anthranilate = 1-(2-carboxyphenylamino)-1-deoxy-D-ribulose 5-phosphate. It participates in amino-acid biosynthesis; L-tryptophan biosynthesis; L-tryptophan from chorismate: step 3/5. This Chlorobaculum tepidum (strain ATCC 49652 / DSM 12025 / NBRC 103806 / TLS) (Chlorobium tepidum) protein is N-(5'-phosphoribosyl)anthranilate isomerase.